The following is a 579-amino-acid chain: CTP synthase (579 aa).

The amidoligase domain stretch occupies residues 1–281; the sequence is MPALRKHPQT…DAYVVRRLNL (281 aa). Ser-23 contributes to the CTP binding site. Residue Ser-23 coordinates UTP. ATP-binding positions include 24–29 and Asp-81; that span reads SLGKGL. Asp-81 and Glu-155 together coordinate Mg(2+). CTP contacts are provided by residues 162–164, 202–207, and Lys-238; these read DIE and KTKPTQ. UTP-binding positions include 202-207 and Lys-238; that span reads KTKPTQ. The Glutamine amidotransferase type-1 domain maps to 306 to 554; the sequence is RIALVGKYID…IGAALDYKAA (249 aa). Residue Gly-369 participates in L-glutamine binding. The Nucleophile; for glutamine hydrolysis role is filled by Cys-396. Residues 397–400, Glu-419, and Arg-480 contribute to the L-glutamine site; that span reads LGLQ. Active-site residues include His-527 and Glu-529.

This sequence belongs to the CTP synthase family. As to quaternary structure, homotetramer.

It carries out the reaction UTP + L-glutamine + ATP + H2O = CTP + L-glutamate + ADP + phosphate + 2 H(+). The enzyme catalyses L-glutamine + H2O = L-glutamate + NH4(+). The catalysed reaction is UTP + NH4(+) + ATP = CTP + ADP + phosphate + 2 H(+). The protein operates within pyrimidine metabolism; CTP biosynthesis via de novo pathway; CTP from UDP: step 2/2. With respect to regulation, allosterically activated by GTP, when glutamine is the substrate; GTP has no effect on the reaction when ammonia is the substrate. The allosteric effector GTP functions by stabilizing the protein conformation that binds the tetrahedral intermediate(s) formed during glutamine hydrolysis. Inhibited by the product CTP, via allosteric rather than competitive inhibition. Its function is as follows. Catalyzes the ATP-dependent amination of UTP to CTP with either L-glutamine or ammonia as the source of nitrogen. Regulates intracellular CTP levels through interactions with the four ribonucleotide triphosphates. The polypeptide is CTP synthase (Mycobacterium sp. (strain JLS)).